The primary structure comprises 421 residues: C2H2 type master regulator of conidiophore development brlA (421 aa).

The segment covering 228–242 (THSPTTPLRSCSIGT) has biased composition (polar residues). The segment at 228-247 (THSPTTPLRSCSIGTASGPD) is disordered. 2 consecutive C2H2-type zinc fingers follow at residues 309–333 (FKCKEPGCKGRFKRQEHLKRHMKSH) and 339–364 (HVCWVPGCERAFSRSDNLNAHYTKTH). The segment covering 361–370 (TKTHSKRGGR) has biased composition (basic residues). The segment at 361-421 (TKTHSKRGGR…REYSVDGLDD (61 aa)) is disordered.

The protein localises to the nucleus. BrlA, abaA and wetA are pivotal regulators of conidiophore development and conidium maturation. They act individually and together to regulate their own expression and that of numerous other sporulation-specific genes. Binds promoters of target genes at brlA response elements (BREs) containing the conserved sequence 5'-(C/A)(A/G)AGGG(G/A)-3'. This Aspergillus parasiticus (strain ATCC 56775 / NRRL 5862 / SRRC 143 / SU-1) protein is C2H2 type master regulator of conidiophore development brlA.